We begin with the raw amino-acid sequence, 70 residues long: DNA-directed RNA polymerase subunit omega (70 aa).

Belongs to the RNA polymerase subunit omega family. As to quaternary structure, the RNAP catalytic core consists of 2 alpha, 1 beta, 1 beta' and 1 omega subunit. When a sigma factor is associated with the core the holoenzyme is formed, which can initiate transcription.

The enzyme catalyses RNA(n) + a ribonucleoside 5'-triphosphate = RNA(n+1) + diphosphate. Functionally, promotes RNA polymerase assembly. Latches the N- and C-terminal regions of the beta' subunit thereby facilitating its interaction with the beta and alpha subunits. The polypeptide is DNA-directed RNA polymerase subunit omega (Bacillus mycoides (strain KBAB4) (Bacillus weihenstephanensis)).